The chain runs to 480 residues: Glutarate-semialdehyde dehydrogenase (480 aa).

Residues 156–157, 180–183, and 233–234 contribute to the NADP(+) site; these read WN, KPAS, and GS. Glu-255 (proton acceptor) is an active-site residue. Residue Leu-256 participates in NADP(+) binding. Cys-289 (nucleophile) is an active-site residue. An NADP(+)-binding site is contributed by Glu-384.

Belongs to the aldehyde dehydrogenase family.

It carries out the reaction 5-oxopentanoate + NADP(+) + H2O = glutarate + NADPH + 2 H(+). It functions in the pathway amino-acid degradation. Catalyzes the conversion of 5-oxopentanoate (glutarate semialdehyde) to glutarate. Involved in L-lysine degradation. The polypeptide is Glutarate-semialdehyde dehydrogenase (Pseudomonas putida (strain ATCC 47054 / DSM 6125 / CFBP 8728 / NCIMB 11950 / KT2440)).